The following is a 369-amino-acid chain: Anhydro-N-acetylmuramic acid kinase (369 aa).

Residue 12–19 coordinates ATP; sequence GTSLDGVD.

It belongs to the anhydro-N-acetylmuramic acid kinase family.

The catalysed reaction is 1,6-anhydro-N-acetyl-beta-muramate + ATP + H2O = N-acetyl-D-muramate 6-phosphate + ADP + H(+). It participates in amino-sugar metabolism; 1,6-anhydro-N-acetylmuramate degradation. Its pathway is cell wall biogenesis; peptidoglycan recycling. In terms of biological role, catalyzes the specific phosphorylation of 1,6-anhydro-N-acetylmuramic acid (anhMurNAc) with the simultaneous cleavage of the 1,6-anhydro ring, generating MurNAc-6-P. Is required for the utilization of anhMurNAc either imported from the medium or derived from its own cell wall murein, and thus plays a role in cell wall recycling. This chain is Anhydro-N-acetylmuramic acid kinase, found in Escherichia coli (strain SMS-3-5 / SECEC).